The following is a 172-amino-acid chain: Gamma-crystallin-4 (172 aa).

2 Beta/gamma crystallin 'Greek key' domains span residues 1 to 37 (IFFYEERNFQGRCYECSSECSDLSSYFNRCNSIRVES) and 38 to 80 (GNWI…RFIP). A connecting peptide region spans residues 81–85 (HPHSQ). 2 consecutive Beta/gamma crystallin 'Greek key' domains span residues 86-126 (YKMR…NVSD) and 127-169 (GHWM…RRVH).

It belongs to the beta/gamma-crystallin family. In terms of assembly, monomer.

In terms of biological role, crystallins are the dominant structural components of the vertebrate eye lens. This Xenopus laevis (African clawed frog) protein is Gamma-crystallin-4 (cryg4).